The primary structure comprises 122 residues: Large ribosomal subunit protein uL14 (122 aa).

It belongs to the universal ribosomal protein uL14 family. Part of the 50S ribosomal subunit. Forms a cluster with proteins L3 and L19. In the 70S ribosome, L14 and L19 interact and together make contacts with the 16S rRNA in bridges B5 and B8.

Binds to 23S rRNA. Forms part of two intersubunit bridges in the 70S ribosome. The protein is Large ribosomal subunit protein uL14 of Shewanella sediminis (strain HAW-EB3).